The sequence spans 562 residues: Phosphoglucomutase-1 (562 aa).

Met1 bears the N-acetylmethionine mark. Lys16 bears the N6-acetyllysine mark. Arg23 is a binding site for alpha-D-glucose 1,6-bisphosphate. Phosphothreonine is present on Thr115. Ser117 contributes to the alpha-D-glucose 1,6-bisphosphate binding site. Ser117 functions as the Phosphoserine intermediate in the catalytic mechanism. Mg(2+) is bound at residue Ser117. Phosphoserine occurs at positions 117 and 134. A Phosphothreonine modification is found at Thr185. A phosphoserine mark is found at Ser201, Ser206, and Ser213. Mg(2+)-binding residues include Asp288, Asp290, and Asp292. Alpha-D-glucose 1,6-bisphosphate is bound by residues Asp292 and Arg293. Lys349 bears the N6-acetyllysine mark. The residue at position 353 (Tyr353) is a Phosphotyrosine. Thr357 serves as a coordination point for alpha-D-glucose 1,6-bisphosphate. Residue Ser369 is modified to Phosphoserine. Positions 376, 378, and 389 each coordinate alpha-D-glucose 1,6-bisphosphate. Ser378 carries the post-translational modification Phosphoserine. Lys419 is modified (N6-succinyllysine). Residue Thr467 is modified to Phosphothreonine; by PAK1. Ser477, Ser485, and Ser505 each carry phosphoserine. Residue Thr507 is modified to Phosphothreonine. Ser509 and Ser541 each carry phosphoserine.

This sequence belongs to the phosphohexose mutase family. As to quaternary structure, monomer. The cofactor is Mg(2+). Phosphorylation at Thr-467 by PAK1 significantly enhances enzymatic activity.

Its subcellular location is the cytoplasm. It carries out the reaction alpha-D-glucose 1-phosphate = alpha-D-glucose 6-phosphate. The catalysed reaction is O-phospho-L-seryl-[protein] + alpha-D-glucose 1-phosphate = alpha-D-glucose 1,6-bisphosphate + L-seryl-[protein]. The enzyme catalyses alpha-D-glucose 1,6-bisphosphate + L-seryl-[protein] = O-phospho-L-seryl-[protein] + alpha-D-glucose 6-phosphate. With respect to regulation, glucose-1,6-bisphosphate enhances phosphorylation of the active site Ser-117, and thereby increases enzyme activity. Its function is as follows. Catalyzes the reversible isomerization of alpha-D-glucose 1-phosphate to alpha-D-glucose 6-phosphate. The mechanism proceeds via the intermediate compound alpha-D-glucose 1,6-bisphosphate. This enzyme participates in both the breakdown and synthesis of glucose. The polypeptide is Phosphoglucomutase-1 (PGM1) (Homo sapiens (Human)).